The sequence spans 160 residues: Ribosomal RNA large subunit methyltransferase H (160 aa).

Residues Leu-76 and Gly-108 each contribute to the S-adenosyl-L-methionine site.

The protein belongs to the RNA methyltransferase RlmH family. Homodimer.

It is found in the cytoplasm. It carries out the reaction pseudouridine(1915) in 23S rRNA + S-adenosyl-L-methionine = N(3)-methylpseudouridine(1915) in 23S rRNA + S-adenosyl-L-homocysteine + H(+). Functionally, specifically methylates the pseudouridine at position 1915 (m3Psi1915) in 23S rRNA. The protein is Ribosomal RNA large subunit methyltransferase H of Rhodopseudomonas palustris (strain ATCC BAA-98 / CGA009).